Consider the following 278-residue polypeptide: Mediator of RNA polymerase II transcription subunit 4 (278 aa).

The stretch at 57–88 (HARILTLRAQVEALEEQKKSSVTALATLRHEL) forms a coiled coil. 2 disordered regions span residues 120–181 (VPPT…EEEE) and 240–278 (VEAP…DLDD). Composition is skewed to basic and acidic residues over residues 124–142 (YRER…KDDA) and 160–172 (DAPK…DNKP). A compositionally biased stretch (low complexity) spans 250 to 268 (AEPVQAQAPRPARPAQPQA).

This sequence belongs to the Mediator complex subunit 4 family. In terms of assembly, component of the Mediator complex.

The protein resides in the nucleus. Component of the Mediator complex, a coactivator involved in the regulated transcription of nearly all RNA polymerase II-dependent genes. Mediator functions as a bridge to convey information from gene-specific regulatory proteins to the basal RNA polymerase II transcription machinery. Mediator is recruited to promoters by direct interactions with regulatory proteins and serves as a scaffold for the assembly of a functional preinitiation complex with RNA polymerase II and the general transcription factors. The protein is Mediator of RNA polymerase II transcription subunit 4 (MED4) of Phaeosphaeria nodorum (strain SN15 / ATCC MYA-4574 / FGSC 10173) (Glume blotch fungus).